The chain runs to 539 residues: Glycine betaine transporter 2 (539 aa).

12 consecutive transmembrane segments (helical) span residues 44 to 64 (LTNPVFWLSGSFLSLFVLLAL), 85 to 105 (FGAYWQVLLLLNFLIGLALAF), 129 to 149 (IVLCTLLAGGGVFWAAAEPIA), 175 to 195 (FMHWGFLAWAILGCLSSIVLM), 231 to 251 (CSIIAVAAGTIGPIGFLGLQI), 265 to 285 (FITQSMVIVAAIVMYTLSALS), 299 to 319 (IILSVLLIGYILFFGPTSFII), 348 to 368 (WWTVFFWGWFIGYGPMMAIFI), 380 to 400 (LILSISIAAPLITCFWFSIVG), 426 to 446 (VLLAITGELPFPMIISVLFLI), 480 to 500 (FWGLMMGVVAIALISMGSGGI), and 503 to 523 (LQSFIVITAVPVSFILLPSIL).

This sequence belongs to the BCCT transporter (TC 2.A.15) family.

It localises to the cell inner membrane. In terms of biological role, involved in the uptake of the osmoprotectant glycine betaine. The sequence is that of Glycine betaine transporter 2 from Vibrio parahaemolyticus serotype O3:K6 (strain RIMD 2210633).